We begin with the raw amino-acid sequence, 188 residues long: Elongation factor P (188 aa).

This sequence belongs to the elongation factor P family.

The protein resides in the cytoplasm. It functions in the pathway protein biosynthesis; polypeptide chain elongation. In terms of biological role, involved in peptide bond synthesis. Stimulates efficient translation and peptide-bond synthesis on native or reconstituted 70S ribosomes in vitro. Probably functions indirectly by altering the affinity of the ribosome for aminoacyl-tRNA, thus increasing their reactivity as acceptors for peptidyl transferase. This chain is Elongation factor P, found in Phytoplasma mali (strain AT).